The chain runs to 148 residues: Receptor activity-modifying protein 3 (148 aa).

The first 23 residues, 1 to 23 (METGALRRPQLLPLLLLLCGGCP), serve as a signal peptide directing secretion. At 24 to 113 (RAGGCNETGM…CTVDRVHLED (90 aa)) the chain is on the extracellular side. N29, N58, N71, and N103 each carry an N-linked (GlcNAc...) asparagine glycan. Disulfide bonds link C40/C72 and C57/C104. A helical membrane pass occupies residues 114 to 138 (PPDEVLIPLIVIPVVLTVAMAGLVV). Over 139–148 (WRSKRTDTLL) the chain is Cytoplasmic.

It belongs to the RAMP family. In terms of assembly, heterodimer of CALCRL and RAMP3; interaction induces allosteric modulation of CALCRL function and ligand specificity for adrenomedullin/ADM and intermedin/ADM2. Heterodimer of CALCR and RAMP3; interaction form the receptor complex AMYR3 for amylin/IAPP. Interacts with GPER1. In terms of tissue distribution, strongly expressed in lung, breast, immune system and fetal tissues.

Its subcellular location is the cell membrane. The protein resides in the membrane. Accessory protein that interacts with and modulates the function of G-protein coupled receptors including calcitonin gene-related peptide type 1 receptor (CALCRL), calcitonin receptor (CALCR) and G-protein coupled estrogen receptor 1 (GPER1). Required for the transport of CALCRL and GPER1 receptors to the plasma membrane. Plays a role in cardioprotection by reducing cardiac hypertrophy and perivascular fibrosis in a GPER1-dependent manner. Together with CALCRL, form a receptor complex for adrenomedullin/ADM and intermedin/ADM2. Together with CALCR, act as a receptor complex for amylin/IAPP. The polypeptide is Receptor activity-modifying protein 3 (Homo sapiens (Human)).